Reading from the N-terminus, the 357-residue chain is Cinnamyl alcohol dehydrogenase 1 (357 aa).

Position 47 (cysteine 47) interacts with Zn(2+). Position 49 (threonine 49) interacts with NADP(+). Residues histidine 69, glutamate 70, cysteine 100, cysteine 103, cysteine 106, cysteine 114, and cysteine 163 each coordinate Zn(2+). Residues threonine 167, 188-193 (GLGGVG), 211-216 (SSSDKK), threonine 251, glycine 275, and 298-300 (SFI) each bind NADP(+).

The protein belongs to the zinc-containing alcohol dehydrogenase family. Homodimer. It depends on Zn(2+) as a cofactor. In terms of tissue distribution, expressed in leaves, mainly in peltate glands.

The enzyme catalyses (E)-cinnamyl alcohol + NADP(+) = (E)-cinnamaldehyde + NADPH + H(+). It carries out the reaction (E)-coniferol + NADP(+) = (E)-coniferaldehyde + NADPH + H(+). The catalysed reaction is (E)-sinapyl alcohol + NADP(+) = (E)-sinapaldehyde + NADPH + H(+). It catalyses the reaction (E)-4-coumaroyl alcohol + NADP(+) = (E)-4-coumaraldehyde + NADPH + H(+). The enzyme catalyses (E)-caffeyl alcohol + NADP(+) = (E)-caffeyl aldehyde + NADPH + H(+). The protein operates within aromatic compound metabolism; phenylpropanoid biosynthesis. With respect to regulation, 60% inhibition by 5 mM Ca(+), Mg(+) or Cu(+). Its function is as follows. Involved in the production of citral, a mixture of geranial and neral with a strong lemony scent. Reversibly oxidizes geraniol to produce geranial at half the efficiency compared with its activity with cinnamyl alcohol. Does not use nerol and neral as substrates. This Ocimum basilicum (Sweet basil) protein is Cinnamyl alcohol dehydrogenase 1 (CAD1).